The primary structure comprises 699 residues: Elongation factor G (699 aa).

Residues 8 to 290 (NKYRNLGIMA…KVIELLPSPV (283 aa)) form the tr-type G domain. GTP contacts are provided by residues 17 to 24 (AHIDAGKT), 88 to 92 (DTPGH), and 142 to 145 (NKMD).

This sequence belongs to the TRAFAC class translation factor GTPase superfamily. Classic translation factor GTPase family. EF-G/EF-2 subfamily.

The protein localises to the cytoplasm. In terms of biological role, catalyzes the GTP-dependent ribosomal translocation step during translation elongation. During this step, the ribosome changes from the pre-translocational (PRE) to the post-translocational (POST) state as the newly formed A-site-bound peptidyl-tRNA and P-site-bound deacylated tRNA move to the P and E sites, respectively. Catalyzes the coordinated movement of the two tRNA molecules, the mRNA and conformational changes in the ribosome. This Dichelobacter nodosus (strain VCS1703A) protein is Elongation factor G.